Reading from the N-terminus, the 572-residue chain is Mitochondrial distribution and morphology protein 34 (572 aa).

The 195-residue stretch at 1 to 195 (MAFNFNWSPL…LPAIIHRLSL (195 aa)) folds into the SMP-LTD domain. 4 disordered regions span residues 212–236 (TASA…VDAL), 321–426 (VGSM…PDND), 477–522 (SATP…DNPT), and 553–572 (CGPF…AYGH). Positions 330–348 (SASMVSSQSRSSTPSHTFS) are enriched in low complexity. The segment covering 358-370 (RHSKAHARKRKKR) has biased composition (basic residues). Over residues 371–381 (VVDLRRPKTTD) the composition is skewed to basic and acidic residues. Composition is skewed to polar residues over residues 387 to 400 (SDES…SAPS) and 500 to 511 (DSSAGSSRQLPS).

Belongs to the MDM34 family. As to quaternary structure, component of the ER-mitochondria encounter structure (ERMES) or MDM complex, composed of mmm1, mdm10, mdm12 and mdm34.

The protein localises to the mitochondrion outer membrane. In terms of biological role, component of the ERMES/MDM complex, which serves as a molecular tether to connect the endoplasmic reticulum (ER) and mitochondria. Components of this complex are involved in the control of mitochondrial shape and protein biogenesis, and function in nonvesicular lipid trafficking between the ER and mitochondria. Mdm34 is required for the interaction of the ER-resident membrane protein mmm1 and the outer mitochondrial membrane-resident beta-barrel protein mdm10. The protein is Mitochondrial distribution and morphology protein 34 of Aspergillus fumigatus (strain CBS 144.89 / FGSC A1163 / CEA10) (Neosartorya fumigata).